A 101-amino-acid polypeptide reads, in one-letter code: Capsid assembly scaffolding protein (101 aa).

The interval 1–24 (MPMERDSHEEILNKLNDPELEHSE) is disordered. Residues 79–99 (EEIKQEELSETITIEDLEKQA) adopt a coiled-coil conformation.

The protein belongs to the phi29likevirus scaffolding protein family. In terms of assembly, homodimer. Interacts non-specifically with DNA; probably binds DNA in the early stages of DNA packaging.

Its function is as follows. Scaffolding protein involved in the icosahedric procapsid assembly. Coassembles with the capsid proteins to form the procapsid. The scaffolding protein is found within the capsid as a serie of concentric shells. During DNA packaging, the scaffolding protein molecules are released from the procapsid. The protein is Capsid assembly scaffolding protein (7) of Bacillus subtilis (Bacteriophage B103).